The chain runs to 100 residues: Defensin-B4 (100 aa).

An N-terminal signal peptide occupies residues 1-22 (MRASLLLFILLVYLAHAPQAQG). Residues 23-26 (VFGP) constitute a propeptide that is removed on maturation. 3 disulfides stabilise this stretch: Cys29–Cys56, Cys36–Cys50, and Cys40–Cys57. Residues 60 to 100 (STGTSSSQGSHEVPVINSEPALESKPEPQDTQEEEATMVSE) form a disordered region. The segment covering 89-100 (DTQEEEATMVSE) has biased composition (acidic residues).

It belongs to the beta-defensin family. Highly expressed in kidney, lowly expressed in spleen, and expressed at lower levels in lung.

Its subcellular location is the secreted. In terms of biological role, has antimicrobial activity. This is Defensin-B4 from Ornithorhynchus anatinus (Duckbill platypus).